The following is a 157-amino-acid chain: Small ribosomal subunit protein uS7 (157 aa).

Belongs to the universal ribosomal protein uS7 family. Part of the 30S ribosomal subunit. Contacts proteins S9 and S11.

One of the primary rRNA binding proteins, it binds directly to 16S rRNA where it nucleates assembly of the head domain of the 30S subunit. Is located at the subunit interface close to the decoding center, probably blocks exit of the E-site tRNA. The protein is Small ribosomal subunit protein uS7 of Leptospira interrogans serogroup Icterohaemorrhagiae serovar copenhageni (strain Fiocruz L1-130).